We begin with the raw amino-acid sequence, 442 residues long: tRNA modification GTPase MnmE (442 aa).

The (6S)-5-formyl-5,6,7,8-tetrahydrofolate site is built by Arg-27, Glu-84, and Lys-124. The TrmE-type G domain occupies 221–366 (GLHVVIVGAP…LLTNLQNFAE (146 aa)). Residues 231-236 (NAGKSS), 250-256 (SEEAGTT), and 275-278 (DTAG) contribute to the GTP site. Ser-235 and Thr-256 together coordinate Mg(2+). Lys-442 is a binding site for (6S)-5-formyl-5,6,7,8-tetrahydrofolate.

It belongs to the TRAFAC class TrmE-Era-EngA-EngB-Septin-like GTPase superfamily. TrmE GTPase family. In terms of assembly, homodimer. Heterotetramer of two MnmE and two MnmG subunits. The cofactor is K(+).

Its subcellular location is the cytoplasm. Its function is as follows. Exhibits a very high intrinsic GTPase hydrolysis rate. Involved in the addition of a carboxymethylaminomethyl (cmnm) group at the wobble position (U34) of certain tRNAs, forming tRNA-cmnm(5)s(2)U34. The chain is tRNA modification GTPase MnmE from Brucella anthropi (strain ATCC 49188 / DSM 6882 / CCUG 24695 / JCM 21032 / LMG 3331 / NBRC 15819 / NCTC 12168 / Alc 37) (Ochrobactrum anthropi).